A 271-amino-acid polypeptide reads, in one-letter code: Dermonecrotic toxin SpeSicTox-betaIF1 (271 aa).

The active site involves H3. Residues E23 and D25 each coordinate Mg(2+). The active-site Nucleophile is H39. 2 cysteine pairs are disulfide-bonded: C43–C49 and C45–C188. D83 provides a ligand contact to Mg(2+).

It belongs to the arthropod phospholipase D family. Class II subfamily. Mg(2+) serves as cofactor. Expressed by the venom gland.

It is found in the secreted. It catalyses the reaction an N-(acyl)-sphingosylphosphocholine = an N-(acyl)-sphingosyl-1,3-cyclic phosphate + choline. It carries out the reaction an N-(acyl)-sphingosylphosphoethanolamine = an N-(acyl)-sphingosyl-1,3-cyclic phosphate + ethanolamine. The enzyme catalyses a 1-acyl-sn-glycero-3-phosphocholine = a 1-acyl-sn-glycero-2,3-cyclic phosphate + choline. The catalysed reaction is a 1-acyl-sn-glycero-3-phosphoethanolamine = a 1-acyl-sn-glycero-2,3-cyclic phosphate + ethanolamine. In terms of biological role, dermonecrotic toxins cleave the phosphodiester linkage between the phosphate and headgroup of certain phospholipids (sphingolipid and lysolipid substrates), forming an alcohol (often choline) and a cyclic phosphate. This toxin acts on sphingomyelin (SM). It may also act on ceramide phosphoethanolamine (CPE), lysophosphatidylcholine (LPC) and lysophosphatidylethanolamine (LPE), but not on lysophosphatidylserine (LPS), and lysophosphatidylglycerol (LPG). It acts by transphosphatidylation, releasing exclusively cyclic phosphate products as second products. Induces dermonecrosis, hemolysis, increased vascular permeability, edema, inflammatory response, and platelet aggregation. The polypeptide is Dermonecrotic toxin SpeSicTox-betaIF1 (Sicarius peruensis (Six-eyed sand spider)).